A 93-amino-acid chain; its full sequence is Acylphosphatase (93 aa).

Residues 7–93 (RLTAWVHGWV…TEQITGFSER (87 aa)) form the Acylphosphatase-like domain. Residues R22 and N40 contribute to the active site.

It belongs to the acylphosphatase family.

It catalyses the reaction an acyl phosphate + H2O = a carboxylate + phosphate + H(+). This chain is Acylphosphatase (acyP), found in Mycobacterium tuberculosis (strain ATCC 25177 / H37Ra).